Consider the following 347-residue polypeptide: S-adenosylmethionine decarboxylase proenzyme (347 aa).

Active-site residues include glutamate 10 and glutamate 13. Serine 66 serves as the catalytic Schiff-base intermediate with substrate; via pyruvic acid. At serine 66 the chain carries Pyruvic acid (Ser); by autocatalysis. Cysteine 80 (proton donor; for catalytic activity) is an active-site residue. Catalysis depends on proton acceptor; for processing activity residues serine 237 and histidine 251.

It belongs to the eukaryotic AdoMetDC family. Pyruvate is required as a cofactor. In terms of processing, is synthesized initially as an inactive proenzyme. Formation of the active enzyme involves a self-maturation process in which the active site pyruvoyl group is generated from an internal serine residue via an autocatalytic post-translational modification. Two non-identical subunits are generated from the proenzyme in this reaction, and the pyruvate is formed at the N-terminus of the alpha chain, which is derived from the carboxyl end of the proenzyme. The post-translation cleavage follows an unusual pathway, termed non-hydrolytic serinolysis, in which the side chain hydroxyl group of the serine supplies its oxygen atom to form the C-terminus of the beta chain, while the remainder of the serine residue undergoes an oxidative deamination to produce ammonia and the pyruvoyl group blocking the N-terminus of the alpha chain.

The enzyme catalyses S-adenosyl-L-methionine + H(+) = S-adenosyl 3-(methylsulfanyl)propylamine + CO2. The protein operates within amine and polyamine biosynthesis; S-adenosylmethioninamine biosynthesis; S-adenosylmethioninamine from S-adenosyl-L-methionine: step 1/1. The protein is S-adenosylmethionine decarboxylase proenzyme (SamDC) of Drosophila melanogaster (Fruit fly).